The chain runs to 393 residues: S-adenosylmethionine synthase (393 aa).

His16 contacts ATP. Mg(2+) is bound at residue Asp18. Residue Glu44 participates in K(+) binding. Positions 57 and 100 each coordinate L-methionine. The segment at 100-110 is flexible loop; the sequence is QSNDIAQGVDH. Residues 167-169, 238-239, Asp247, 253-254, Ala270, and Lys274 each bind ATP; these read DAK, RF, and RK. Asp247 contacts L-methionine. L-methionine is bound at residue Lys278.

The protein belongs to the AdoMet synthase family. Homotetramer; dimer of dimers. It depends on Mg(2+) as a cofactor. The cofactor is K(+).

It is found in the cytoplasm. It carries out the reaction L-methionine + ATP + H2O = S-adenosyl-L-methionine + phosphate + diphosphate. Its pathway is amino-acid biosynthesis; S-adenosyl-L-methionine biosynthesis; S-adenosyl-L-methionine from L-methionine: step 1/1. Functionally, catalyzes the formation of S-adenosylmethionine (AdoMet) from methionine and ATP. The overall synthetic reaction is composed of two sequential steps, AdoMet formation and the subsequent tripolyphosphate hydrolysis which occurs prior to release of AdoMet from the enzyme. In Leptothrix cholodnii (strain ATCC 51168 / LMG 8142 / SP-6) (Leptothrix discophora (strain SP-6)), this protein is S-adenosylmethionine synthase.